Consider the following 500-residue polypeptide: Nitrate/nitrite transporter NrtP (500 aa).

12 consecutive transmembrane segments (helical) span residues 19–39 (WFAF…ATTI), 52–72 (TLGI…GMLL), 79–99 (ITYS…ALAQ), 109–129 (LLMG…AEWF), 147–167 (FGAF…SFFS), 175–195 (LAIA…YNTV), 220–240 (SFWA…LLAW), 247–267 (IHFL…GLFA), 364–384 (WTMT…HFIN), 389–409 (IPVA…GCGA), 425–445 (IAGN…TIFS), and 451–471 (TLFS…AFFL).

It belongs to the major facilitator superfamily. Nitrate/nitrite porter (TC 2.A.1.8) family.

The protein localises to the cell inner membrane. In terms of biological role, transport system for both nitrate and nitrite, with much higher affinity for nitrate than for nitrite. The sequence is that of Nitrate/nitrite transporter NrtP from Nostoc punctiforme (strain ATCC 29133 / PCC 73102).